The chain runs to 513 residues: Aromatic amino acid aminotransferase 2 (513 aa).

Phosphoserine is present on residues serine 90 and serine 92. Pyridoxal 5'-phosphate is bound by residues tyrosine 102, 143–144, asparagine 232, tyrosine 263, and 314–316; these read SN and TFS. Asparagine 232 provides a ligand contact to substrate. Lysine 317 carries the post-translational modification N6-(pyridoxal phosphate)lysine. Arginine 324 is a binding site for pyridoxal 5'-phosphate. Arginine 481 contacts substrate.

This sequence belongs to the class-I pyridoxal-phosphate-dependent aminotransferase family. Pyridoxal 5'-phosphate is required as a cofactor.

The protein localises to the cytoplasm. The enzyme catalyses an aromatic L-alpha-amino acid + 2-oxoglutarate = an aromatic oxo-acid + L-glutamate. It carries out the reaction an aromatic L-alpha-amino acid + 4-methylsulfanyl-2-oxobutanoate = an aromatic oxo-acid + L-methionine. It catalyses the reaction L-kynurenine + 2-oxoglutarate = kynurenate + L-glutamate + H2O. It functions in the pathway amino-acid biosynthesis; L-methionine biosynthesis via salvage pathway; L-methionine from S-methyl-5-thio-alpha-D-ribose 1-phosphate: step 6/6. It participates in amino-acid degradation; L-kynurenine degradation; kynurenate from L-kynurenine: step 1/2. In terms of biological role, general aromatic amino acid transaminase involved in several otherwise unrelated metabolic pathways. Mainly involved in tryptophan degradation. Active with phenylalanine, tyrosine and tryptophan as amino donors and with phenylpyruvate, hydroxyphenylpyruvate and pyruvate as amino acceptors. Does not accept glutamate or 2-oxoglutarate as substrates. Also active with methionine, leucine, glutamine and kynurenine. Catalyzes the formation of methionine from 2-keto-4-methylthiobutyrate (KMTB) in the methionine salvage pathway primarily using aromatic amino acids (tyrosine, phenylalanine and tryptophan) as the amino donors. Catalyzes the irreversible transamination of the L-tryptophan metabolite L-kynurenine to form kynurenic acid (KA) with pyruvate as amino acceptor. This is Aromatic amino acid aminotransferase 2 from Saccharomyces cerevisiae (strain ATCC 204508 / S288c) (Baker's yeast).